Consider the following 541-residue polypeptide: Membrane protein insertase YidC (541 aa).

The helical transmembrane segment at 6–26 (SLLVLALIFISFLVYQQWQLD) threads the bilayer. Positions 34 to 56 (EQTTSITATSDVPASSPSNSQAI) are disordered. The next 4 membrane-spanning stretches (helical) occupy residues 337-357 (FWLLTFIQGIVSNWGLAIICV), 416-436 (LGGCLPILLQMPIFIALYWTF), 454-474 (LSAQDPYYILPILMGISMFLL), and 495-515 (PLVFMFFFLWFPSGLVLYWLV).

The protein belongs to the OXA1/ALB3/YidC family. Type 1 subfamily. As to quaternary structure, interacts with the Sec translocase complex via SecD. Specifically interacts with transmembrane segments of nascent integral membrane proteins during membrane integration.

The protein resides in the cell inner membrane. In terms of biological role, required for the insertion and/or proper folding and/or complex formation of integral membrane proteins into the membrane. Involved in integration of membrane proteins that insert both dependently and independently of the Sec translocase complex, as well as at least some lipoproteins. Aids folding of multispanning membrane proteins. This is Membrane protein insertase YidC from Haemophilus influenzae (strain ATCC 51907 / DSM 11121 / KW20 / Rd).